Reading from the N-terminus, the 499-residue chain is Probable cytosol aminopeptidase (499 aa).

Mn(2+)-binding residues include lysine 267 and aspartate 272. The active site involves lysine 279. Aspartate 290, aspartate 349, and glutamate 351 together coordinate Mn(2+). The active site involves arginine 353.

It belongs to the peptidase M17 family. Mn(2+) serves as cofactor.

Its subcellular location is the cytoplasm. It catalyses the reaction Release of an N-terminal amino acid, Xaa-|-Yaa-, in which Xaa is preferably Leu, but may be other amino acids including Pro although not Arg or Lys, and Yaa may be Pro. Amino acid amides and methyl esters are also readily hydrolyzed, but rates on arylamides are exceedingly low.. The catalysed reaction is Release of an N-terminal amino acid, preferentially leucine, but not glutamic or aspartic acids.. Functionally, presumably involved in the processing and regular turnover of intracellular proteins. Catalyzes the removal of unsubstituted N-terminal amino acids from various peptides. This chain is Probable cytosol aminopeptidase, found in Alkaliphilus oremlandii (strain OhILAs) (Clostridium oremlandii (strain OhILAs)).